The primary structure comprises 123 residues: Small ribosomal subunit protein uS12 (123 aa).

The tract at residues 1–30 is disordered; that stretch reads MPTIQQLIRKPRQPKIKRSKSQHMEGCPQK. A compositionally biased stretch (basic residues) spans 9 to 21; sequence RKPRQPKIKRSKS. A 3-methylthioaspartic acid modification is found at D89. The tract at residues 104–123 is disordered; that stretch reads TQGVKDRRQRRSKYGAKRPK. A compositionally biased stretch (basic residues) spans 110–123; it reads RRQRRSKYGAKRPK.

It belongs to the universal ribosomal protein uS12 family. Part of the 30S ribosomal subunit. Contacts proteins S8 and S17. May interact with IF1 in the 30S initiation complex.

Its function is as follows. With S4 and S5 plays an important role in translational accuracy. Interacts with and stabilizes bases of the 16S rRNA that are involved in tRNA selection in the A site and with the mRNA backbone. Located at the interface of the 30S and 50S subunits, it traverses the body of the 30S subunit contacting proteins on the other side and probably holding the rRNA structure together. The combined cluster of proteins S8, S12 and S17 appears to hold together the shoulder and platform of the 30S subunit. In Jannaschia sp. (strain CCS1), this protein is Small ribosomal subunit protein uS12.